A 340-amino-acid chain; its full sequence is L-threonine 3-dehydrogenase (340 aa).

A Zn(2+)-binding site is contributed by cysteine 38. Active-site charge relay system residues include threonine 40 and histidine 43. Zn(2+) is bound by residues histidine 63, glutamate 64, cysteine 93, cysteine 96, cysteine 99, and cysteine 107. NAD(+)-binding positions include isoleucine 175, aspartate 195, arginine 200, 262-264 (LGI), and 286-287 (IY).

This sequence belongs to the zinc-containing alcohol dehydrogenase family. In terms of assembly, homotetramer. Zn(2+) is required as a cofactor.

The protein resides in the cytoplasm. The catalysed reaction is L-threonine + NAD(+) = (2S)-2-amino-3-oxobutanoate + NADH + H(+). It participates in amino-acid degradation; L-threonine degradation via oxydo-reductase pathway; glycine from L-threonine: step 1/2. Its function is as follows. Catalyzes the NAD(+)-dependent oxidation of L-threonine to 2-amino-3-ketobutyrate. In Legionella pneumophila subsp. pneumophila (strain Philadelphia 1 / ATCC 33152 / DSM 7513), this protein is L-threonine 3-dehydrogenase.